The following is a 379-amino-acid chain: UDP-4-amino-4-deoxy-L-arabinose--oxoglutarate aminotransferase (379 aa).

Lys182 bears the N6-(pyridoxal phosphate)lysine mark.

It belongs to the DegT/DnrJ/EryC1 family. ArnB subfamily. As to quaternary structure, homodimer. Pyridoxal 5'-phosphate serves as cofactor.

The catalysed reaction is UDP-4-amino-4-deoxy-beta-L-arabinose + 2-oxoglutarate = UDP-beta-L-threo-pentopyranos-4-ulose + L-glutamate. It functions in the pathway nucleotide-sugar biosynthesis; UDP-4-deoxy-4-formamido-beta-L-arabinose biosynthesis; UDP-4-deoxy-4-formamido-beta-L-arabinose from UDP-alpha-D-glucuronate: step 2/3. Its pathway is bacterial outer membrane biogenesis; lipopolysaccharide biosynthesis. Its function is as follows. Catalyzes the conversion of UDP-4-keto-arabinose (UDP-Ara4O) to UDP-4-amino-4-deoxy-L-arabinose (UDP-L-Ara4N). The modified arabinose is attached to lipid A and is required for resistance to polymyxin and cationic antimicrobial peptides. The polypeptide is UDP-4-amino-4-deoxy-L-arabinose--oxoglutarate aminotransferase (Escherichia fergusonii (strain ATCC 35469 / DSM 13698 / CCUG 18766 / IAM 14443 / JCM 21226 / LMG 7866 / NBRC 102419 / NCTC 12128 / CDC 0568-73)).